Consider the following 198-residue polypeptide: MIRSVNRTGALMMALILSGCVMKQQQPAPVEPTQPVEPVQPVPQPEQPIPQPQPVPQPPKLVTINWDASVEPLVAQMVRAATVTPGSVLLVDRIKNSTNGALQGEKATSAIQNALNNNGKFTLVSSEQLAQAKQTLGLSPDDSLNSRSKAIGLARNLNAQYVLYSTAKGDVKSPTLQMQLMLVQTGEIIWSGNGVAQN.

A signal peptide spans 1-19; sequence MIRSVNRTGALMMALILSG. Residue Cys-20 is the site of N-palmitoyl cysteine attachment. Residue Cys-20 is the site of S-diacylglycerol cysteine attachment. The span at 26-37 shows a compositional bias: low complexity; that stretch reads QPAPVEPTQPVE. Positions 26 to 59 are disordered; the sequence is QPAPVEPTQPVEPVQPVPQPEQPIPQPQPVPQPP. The span at 38 to 59 shows a compositional bias: pro residues; sequence PVQPVPQPEQPIPQPQPVPQPP.

It belongs to the LpoB family. As to quaternary structure, interacts with PBP1b.

The protein localises to the cell outer membrane. Functionally, regulator of peptidoglycan synthesis that is essential for the function of penicillin-binding protein 1B (PBP1b). The sequence is that of Penicillin-binding protein activator LpoB from Pantoea ananatis (strain LMG 20103).